Reading from the N-terminus, the 337-residue chain is 1-aminocyclopropane-1-carboxylate deaminase (337 aa).

N6-(pyridoxal phosphate)lysine is present on K50. Catalysis depends on S77, which acts as the Nucleophile.

It belongs to the ACC deaminase/D-cysteine desulfhydrase family. In terms of assembly, homotrimer. Requires pyridoxal 5'-phosphate as cofactor.

The enzyme catalyses 1-aminocyclopropane-1-carboxylate + H2O = 2-oxobutanoate + NH4(+). Catalyzes a cyclopropane ring-opening reaction, the irreversible conversion of 1-aminocyclopropane-1-carboxylate (ACC) to ammonia and alpha-ketobutyrate. Allows growth on ACC as a nitrogen source. This Methylobacterium nodulans (strain LMG 21967 / CNCM I-2342 / ORS 2060) protein is 1-aminocyclopropane-1-carboxylate deaminase.